Reading from the N-terminus, the 607-residue chain is Ceramide kinase (607 aa).

The region spanning 135–358 is the DAGKc domain; that stretch reads DRPKSLMVFV…LDIAQVVRWK (224 aa). ATP is bound by residues 145-149, Thr176, and 205-211; these read HPLCG and GDGLFNE. Position 204 to 207 (204 to 207) interacts with substrate; it reads GGDG. Catalysis depends on Asp206, which acts as the Proton donor/acceptor. The segment at 247-297 is disordered; sequence NDLSNSELTGDDANAISGSSNTPDDHEPLLSTTRSTGLDISSSDSSDEPCN. Over residues 276–286 the composition is skewed to polar residues; sequence LSTTRSTGLDI. ATP is bound at residue Ser320. The CXXXCXXC signature appears at 454-461; it reads CRTNCLIC.

It depends on Ca(2+) as a cofactor. Mg(2+) serves as cofactor. Highly expressed in leaves and at lower levels in stems.

The enzyme catalyses an N-acylsphing-4-enine + ATP = an N-acylsphing-4-enine 1-phosphate + ADP + H(+). Catalyzes specifically the phosphorylation of ceramide to form ceramide 1-phosphate. Possesses activity on ceramide analog (C6 synthetic ceramide) in vitro. Ceramide is a critical sphingolipid metabolite that induces programmed cell death (PCD) in plants and ceramide-1-phosphate has a PCD suppressive effect. Thus, ceramide phosphorylation plays a role in the modulation of PCD and CERK activity is crucial for the maintenance of cell viability. This is Ceramide kinase (CERK) from Oryza sativa subsp. japonica (Rice).